Consider the following 215-residue polypeptide: 3-demethoxyubiquinol 3-hydroxylase (215 aa).

Fe cation is bound by residues Glu-64, Glu-94, His-97, Glu-146, Glu-178, and His-181.

This sequence belongs to the COQ7 family. Requires Fe cation as cofactor.

It is found in the cell membrane. The enzyme catalyses a 5-methoxy-2-methyl-3-(all-trans-polyprenyl)benzene-1,4-diol + AH2 + O2 = a 3-demethylubiquinol + A + H2O. It participates in cofactor biosynthesis; ubiquinone biosynthesis. Catalyzes the hydroxylation of 2-nonaprenyl-3-methyl-6-methoxy-1,4-benzoquinol during ubiquinone biosynthesis. This chain is 3-demethoxyubiquinol 3-hydroxylase, found in Pseudomonas fluorescens (strain Pf0-1).